Consider the following 356-residue polypeptide: Neurogenic differentiation factor 1 (356 aa).

Positions 1-94 (MTKSYSESGL…GPKKKKMTKA (94 aa)) are disordered. Positions 58 to 78 (EEEDEDEDLEEEEEEEEEDDD) are enriched in acidic residues. Residues 81–93 (PKRRGPKKKKMTK) show a composition bias toward basic residues. Residues 87–93 (KKKKMTK) carry the Nuclear localization signal motif. The region spanning 101–153 (LRRMKANARERNRMHGLNAALDNLRKVVPCYSKTQKLSKIETLRLAKNYIWAL) is the bHLH domain. 4 positions are modified to phosphoserine: Ser162, Ser259, Ser266, and Ser274. A Phosphoserine; by CaMK2 modification is found at Ser335.

In terms of assembly, efficient DNA-binding requires dimerization with another bHLH protein. Heterodimer with TCF3/E47; the heterodimer is inhibited in presence of ID2, but not NR0B2, to E-box element. Interacts with EP300; the interaction is inhibited by NR0B2. Interacts with RREB1. Interacts with ATOH8. Post-translationally, phosphorylated. In islet cells, phosphorylated on Ser-274 upon glucose stimulation; which may be required for nuclear localization. In activated neurons, phosphorylated on Ser-335; which promotes dendritic growth. Phosphorylated by MAPK1; phosphorylation regulates heterodimerization and DNA-binding activities. Phosphorylation on Ser-266 and Ser-274 increases transactivation on the insulin promoter in glucose-stimulated insulinoma cells.

It is found in the cytoplasm. The protein resides in the nucleus. Its function is as follows. Acts as a transcriptional activator: mediates transcriptional activation by binding to E box-containing promoter consensus core sequences 5'-CANNTG-3'. Associates with the p300/CBP transcription coactivator complex to stimulate transcription of the secretin gene as well as the gene encoding the cyclin-dependent kinase inhibitor CDKN1A. Contributes to the regulation of several cell differentiation pathways, like those that promote the formation of early retinal ganglion cells, inner ear sensory neurons, granule cells forming either the cerebellum or the dentate gyrus cell layer of the hippocampus, endocrine islet cells of the pancreas and enteroendocrine cells of the small intestine. Together with PAX6 or SIX3, is required for the regulation of amacrine cell fate specification. Also required for dendrite morphogenesis and maintenance in the cerebellar cortex. Associates with chromatin to enhancer regulatory elements in genes encoding key transcriptional regulators of neurogenesis. The polypeptide is Neurogenic differentiation factor 1 (NEUROD1) (Homo sapiens (Human)).